Here is a 224-residue protein sequence, read N- to C-terminus: Urease accessory protein UreF (224 aa).

It belongs to the UreF family. In terms of assembly, ureD, UreF and UreG form a complex that acts as a GTP-hydrolysis-dependent molecular chaperone, activating the urease apoprotein by helping to assemble the nickel containing metallocenter of UreC. The UreE protein probably delivers the nickel.

The protein localises to the cytoplasm. In terms of biological role, required for maturation of urease via the functional incorporation of the urease nickel metallocenter. In Nitrosococcus oceani (strain ATCC 19707 / BCRC 17464 / JCM 30415 / NCIMB 11848 / C-107), this protein is Urease accessory protein UreF.